Here is a 423-residue protein sequence, read N- to C-terminus: Glutamyl-tRNA(Gln) amidotransferase subunit A (423 aa).

The interval 1–20 is disordered; it reads MSHNAFITEETIEPTDDGPL. A compositionally biased stretch (acidic residues) spans 10-19; sequence ETIEPTDDGP. Residues lysine 28 and serine 103 each act as charge relay system in the active site. Positions 75–108 are disordered; that stretch reads EFGMGTTTETSAFGPTENPAAEGRVPGGSSGGSA. Serine 127 acts as the Acyl-ester intermediate in catalysis. The segment at 183–206 is disordered; that stretch reads DERDGTTREPPAGQPTYADAADGD.

Belongs to the amidase family. GatA subfamily. Heterotrimer of A, B and C subunits.

It catalyses the reaction L-glutamyl-tRNA(Gln) + L-glutamine + ATP + H2O = L-glutaminyl-tRNA(Gln) + L-glutamate + ADP + phosphate + H(+). Allows the formation of correctly charged Gln-tRNA(Gln) through the transamidation of misacylated Glu-tRNA(Gln) in organisms which lack glutaminyl-tRNA synthetase. The reaction takes place in the presence of glutamine and ATP through an activated gamma-phospho-Glu-tRNA(Gln). The protein is Glutamyl-tRNA(Gln) amidotransferase subunit A of Natronomonas pharaonis (strain ATCC 35678 / DSM 2160 / CIP 103997 / JCM 8858 / NBRC 14720 / NCIMB 2260 / Gabara) (Halobacterium pharaonis).